The primary structure comprises 619 residues: Chaperone protein HscA homolog (619 aa).

It belongs to the heat shock protein 70 family.

In terms of biological role, chaperone involved in the maturation of iron-sulfur cluster-containing proteins. Has a low intrinsic ATPase activity which is markedly stimulated by HscB. The protein is Chaperone protein HscA homolog of Methylococcus capsulatus (strain ATCC 33009 / NCIMB 11132 / Bath).